The following is a 201-amino-acid chain: Holliday junction branch migration complex subunit RuvA (201 aa).

The domain I stretch occupies residues 1 to 64 (MYAYIRGKLT…EDAQLLYGFI (64 aa)). Positions 65–143 (NEEEKDMFLS…ITRETTETLL (79 aa)) are domain II. The interval 144 to 150 (SMNEENS) is flexible linker. A domain III region spans residues 151 to 201 (NSENLVKEALLALEALGYSKREISKVEKVLNKSTFDSVDEAVKLGLKTLVS).

This sequence belongs to the RuvA family. In terms of assembly, homotetramer. Forms an RuvA(8)-RuvB(12)-Holliday junction (HJ) complex. HJ DNA is sandwiched between 2 RuvA tetramers; dsDNA enters through RuvA and exits via RuvB. An RuvB hexamer assembles on each DNA strand where it exits the tetramer. Each RuvB hexamer is contacted by two RuvA subunits (via domain III) on 2 adjacent RuvB subunits; this complex drives branch migration. In the full resolvosome a probable DNA-RuvA(4)-RuvB(12)-RuvC(2) complex forms which resolves the HJ.

It localises to the cytoplasm. In terms of biological role, the RuvA-RuvB-RuvC complex processes Holliday junction (HJ) DNA during genetic recombination and DNA repair, while the RuvA-RuvB complex plays an important role in the rescue of blocked DNA replication forks via replication fork reversal (RFR). RuvA specifically binds to HJ cruciform DNA, conferring on it an open structure. The RuvB hexamer acts as an ATP-dependent pump, pulling dsDNA into and through the RuvAB complex. HJ branch migration allows RuvC to scan DNA until it finds its consensus sequence, where it cleaves and resolves the cruciform DNA. The chain is Holliday junction branch migration complex subunit RuvA from Staphylococcus haemolyticus (strain JCSC1435).